We begin with the raw amino-acid sequence, 183 residues long: Probable RNA 2'-phosphotransferase (183 aa).

It belongs to the KptA/TPT1 family.

In terms of biological role, removes the 2'-phosphate from RNA via an intermediate in which the phosphate is ADP-ribosylated by NAD followed by a presumed transesterification to release the RNA and generate ADP-ribose 1''-2''-cyclic phosphate (APPR&gt;P). May function as an ADP-ribosylase. The sequence is that of Probable RNA 2'-phosphotransferase from Clostridium perfringens (strain 13 / Type A).